The primary structure comprises 1323 residues: Sister chromatid cohesion protein PDS5 homolog A-A (1323 aa).

The HEAT repeat unit spans residues Phe-385–Tyr-421. A disordered region spans residues Leu-1139–Arg-1323. Low complexity predominate over residues Ser-1153 to Ser-1165. Polar residues-rich tracts occupy residues Asp-1166 to Glu-1176 and Leu-1210 to Thr-1220. A compositionally biased stretch (basic and acidic residues) spans Asn-1235–Asp-1246.

As to quaternary structure, interacts with the cohesin complex. Binds chromatin in a cohesin-dependent manner.

The protein localises to the nucleus. Its function is as follows. May regulate sister chromatid cohesion during mitosis and couple it to DNA replication. This chain is Sister chromatid cohesion protein PDS5 homolog A-A (pds5a-a), found in Xenopus laevis (African clawed frog).